The sequence spans 825 residues: Beta-glucosidase (825 aa).

The signal sequence occupies residues 1-20 (MLLPLYGLASFLVLSQAALV). 5 N-linked (GlcNAc...) asparagine glycosylation sites follow: Asn-21, Asn-74, Asn-97, Asn-230, and Asn-271. Residue Asp-299 is part of the active site. N-linked (GlcNAc...) asparagine glycosylation is found at Asn-328, Asn-335, Asn-537, Asn-550, Asn-556, Asn-578, Asn-667, Asn-690, Asn-718, Asn-733, and Asn-761.

This sequence belongs to the glycosyl hydrolase 3 family. Homotetramer.

The catalysed reaction is Hydrolysis of terminal, non-reducing beta-D-glucosyl residues with release of beta-D-glucose.. It participates in glycan metabolism; cellulose degradation. In Wickerhamomyces anomalus (Yeast), this protein is Beta-glucosidase.